The chain runs to 377 residues: Tubulin--tyrosine ligase (377 aa).

Residues 3–370 enclose the TTL domain; that stretch reads TFVVRQENSS…PPDTEQVPQQ (368 aa).

The protein belongs to the tubulin--tyrosine ligase family. Monomer. It depends on Mg(2+) as a cofactor. The cofactor is K(+).

The enzyme catalyses C-terminal L-alpha-aminoacyl-L-glutamyl-L-glutamyl-[tubulin] + L-tyrosine + ATP = C-terminal L-alpha-aminoacyl-L-glutamyl-L-glutamyl-L-tyrosyl-[tubulin] + ADP + phosphate + H(+). Functionally, catalyzes the post-translational addition of a tyrosine to the C-terminal end of detyrosinated alpha-tubulin. The protein is Tubulin--tyrosine ligase (Ttl) of Rattus norvegicus (Rat).